A 374-amino-acid polypeptide reads, in one-letter code: Peptide chain release factor 2 (374 aa).

Gln-252 carries the post-translational modification N5-methylglutamine.

It belongs to the prokaryotic/mitochondrial release factor family. Methylated by PrmC. Methylation increases the termination efficiency of RF2.

It localises to the cytoplasm. Peptide chain release factor 2 directs the termination of translation in response to the peptide chain termination codons UGA and UAA. This Xanthomonas euvesicatoria pv. vesicatoria (strain 85-10) (Xanthomonas campestris pv. vesicatoria) protein is Peptide chain release factor 2.